The sequence spans 262 residues: Ornithine carbamoyltransferase (262 aa).

Carbamoyl phosphate is bound by residues 3-7 (STRTR), glutamine 30, arginine 54, and 81-84 (HPTQ). L-ornithine is bound by residues asparagine 114, aspartate 178, and 182 to 183 (SM). Carbamoyl phosphate-binding positions include 219–222 (HCLP) and threonine 247.

Belongs to the aspartate/ornithine carbamoyltransferase superfamily. OTCase family.

It localises to the cytoplasm. It catalyses the reaction carbamoyl phosphate + L-ornithine = L-citrulline + phosphate + H(+). The protein operates within amino-acid biosynthesis; L-arginine biosynthesis; L-arginine from L-ornithine and carbamoyl phosphate: step 1/3. Reversibly catalyzes the transfer of the carbamoyl group from carbamoyl phosphate (CP) to the N(epsilon) atom of ornithine (ORN) to produce L-citrulline. This Neisseria mucosa protein is Ornithine carbamoyltransferase (argF).